The sequence spans 357 residues: RNA-binding protein 4B (357 aa).

RRM domains are found at residues 2 to 72 (VKLF…ASKN) and 78 to 148 (TKLH…LSTS). The CCHC-type zinc finger occupies 160 to 177 (SGCYRCGKEGHWSKECPV). Positions 196 to 357 (AVRTPYTMGY…YVDRTRYSAF (162 aa)) are interaction with TNPO3.

Interacts with TNPO3, which may mediate nuclear import of the protein. In terms of tissue distribution, expressed in the suprachiasmatic nucleus (SCN) (at protein level). Expressed in the suprachiasmatic nucleus (SCN).

It is found in the nucleus. The protein localises to the nucleolus. Required for the translational activation of PER1 mRNA in response to circadian clock. Binds directly to the 3'-UTR of the PER1 mRNA. This Mus musculus (Mouse) protein is RNA-binding protein 4B (Rbm4b).